A 275-amino-acid polypeptide reads, in one-letter code: MAQALGFAYRMAVPAAIGVAVLQSSIYDVKGGSRAVIFDRLSGVKETVINEGTHFLVPWLQRSIVFDVRTKPRNIATTTGSKDLQMVSLTLRVLHRPEVQALPKIYQNLGQDYDERVLPSIGNEVLKSIVAQFDAAELITQREAVSQRISSDLRKRAAEFNIALEDVSITHMTFGKEFTKAVEQKQIAQQDAERARFIVEKAEQERQANVIRAEGEAESAETISKAIAKNGDGLVQIRKIEASRDIAATLAANPNVVYLPSGGKSGSQMLLNVGR.

The AIM motif lies at 106 to 109; it reads YQNL.

Belongs to the prohibitin family. As to quaternary structure, the mitochondrial prohibitin complex consists of two subunits (PHB1 and PHB2). The subunits assemble into a membrane-associated ring-shaped supercomplex of approximately 1 mDa. Interacts with ATG24/SNX4; the interaction is direct and plays a role in mitophagy.

The protein resides in the mitochondrion inner membrane. Prohibitin probably acts as a holdase/unfoldase for the stabilization of newly synthesized mitochondrial proteins. Involved in mitophagy. Required for the switch to necrotrophic growth. The protein is Prohibitin-1 of Colletotrichum higginsianum (strain IMI 349063) (Crucifer anthracnose fungus).